The chain runs to 324 residues: Polyphosphate glucokinase (324 aa).

The interval 53–79 (TSTDATADTPRTSPPSDTAGTTSRHRG) is disordered. Positions 62-74 (PRTSPPSDTAGTT) are enriched in polar residues. 83 to 88 (DIGGSS) is a binding site for ATP.

This sequence belongs to the ROK (NagC/XylR) family. In terms of assembly, homodimer.

It carries out the reaction [phosphate](n) + D-glucose = [phosphate](n-1) + D-glucose 6-phosphate + H(+). The catalysed reaction is D-glucose + ATP = D-glucose 6-phosphate + ADP + H(+). Its function is as follows. Catalyzes the phosphorylation of glucose using polyphosphate or ATP as the phosphoryl donor. In Mycobacterium leprae (strain TN), this protein is Polyphosphate glucokinase (ppgK).